Reading from the N-terminus, the 164-residue chain is Phosphopantetheine adenylyltransferase (164 aa).

A substrate-binding site is contributed by Ser-9. Residues 9-10 (SF) and His-17 contribute to the ATP site. Positions 41, 74, and 88 each coordinate substrate. ATP contacts are provided by residues 89–91 (GVR), Glu-99, and 124–130 (NSFVASS).

This sequence belongs to the bacterial CoaD family. Homohexamer. Mg(2+) is required as a cofactor.

Its subcellular location is the cytoplasm. It carries out the reaction (R)-4'-phosphopantetheine + ATP + H(+) = 3'-dephospho-CoA + diphosphate. Its pathway is cofactor biosynthesis; coenzyme A biosynthesis; CoA from (R)-pantothenate: step 4/5. Its function is as follows. Reversibly transfers an adenylyl group from ATP to 4'-phosphopantetheine, yielding dephospho-CoA (dPCoA) and pyrophosphate. The chain is Phosphopantetheine adenylyltransferase from Lactobacillus helveticus (strain DPC 4571).